Reading from the N-terminus, the 101-residue chain is Small ribosomal subunit protein uS14 (101 aa).

The protein belongs to the universal ribosomal protein uS14 family. As to quaternary structure, part of the 30S ribosomal subunit. Contacts proteins S3 and S10.

Its function is as follows. Binds 16S rRNA, required for the assembly of 30S particles and may also be responsible for determining the conformation of the 16S rRNA at the A site. This chain is Small ribosomal subunit protein uS14, found in Sodalis glossinidius (strain morsitans).